Here is a 108-residue protein sequence, read N- to C-terminus: Histone H4 (108 aa).

A disordered region spans residues 1–36 (MSSAQSRGGKTGGKVGGKVGAKRHKKTQKEHINGIT). The segment covering 9 to 19 (GKTGGKVGGKV) has biased composition (gly residues).

It belongs to the histone H4 family. As to quaternary structure, the nucleosome is a histone octamer containing two molecules each of H2A, H2B, H3 and H4 assembled in one H3-H4 heterotetramer and two H2A-H2B heterodimers. The octamer wraps approximately 147 bp of DNA.

The protein resides in the nucleus. It localises to the chromosome. Its function is as follows. Core component of nucleosome. Nucleosomes wrap and compact DNA into chromatin, limiting DNA accessibility to the cellular machineries which require DNA as a template. Histones thereby play a central role in transcription regulation, DNA repair, DNA replication and chromosomal stability. DNA accessibility is regulated via a complex set of post-translational modifications of histones, also called histone code, and nucleosome remodeling. This is Histone H4 (H4a) from Dictyostelium discoideum (Social amoeba).